The chain runs to 185 residues: uncharacterized protein (185 aa).

This sequence belongs to the EUO family.

This is an uncharacterized protein from Chlamydia muridarum (strain MoPn / Nigg).